An 82-amino-acid chain; its full sequence is Small ribosomal subunit protein uS17 (82 aa).

This sequence belongs to the universal ribosomal protein uS17 family. In terms of assembly, part of the 30S ribosomal subunit.

In terms of biological role, one of the primary rRNA binding proteins, it binds specifically to the 5'-end of 16S ribosomal RNA. In Shewanella frigidimarina (strain NCIMB 400), this protein is Small ribosomal subunit protein uS17.